The primary structure comprises 289 residues: Polyketide biosynthesis malonyl CoA-acyl carrier protein transacylase BaeC (289 aa).

Catalysis depends on residues Ser87 and His193.

This sequence belongs to the FabD family.

It localises to the cytoplasm. It carries out the reaction holo-[ACP] + malonyl-CoA = malonyl-[ACP] + CoA. The protein operates within antibiotic biosynthesis; bacillaene biosynthesis. Involved in some intermediate steps for the synthesis of the antibiotic polyketide bacillaene which is involved in secondary metabolism. It catalyzes the transfer of the malonyl-CoA group to the acyl-carrier-protein AcpK (Mal-AcpK). In Bacillus velezensis (strain DSM 23117 / BGSC 10A6 / LMG 26770 / FZB42) (Bacillus amyloliquefaciens subsp. plantarum), this protein is Polyketide biosynthesis malonyl CoA-acyl carrier protein transacylase BaeC (baeC).